A 239-amino-acid chain; its full sequence is Ribose-5-phosphate isomerase A (239 aa).

Residues 40 to 43, 96 to 99, and 110 to 113 each bind substrate; these read SGST, DGAD, and KGGG. The Proton acceptor role is filled by Glu-119. Substrate is bound at residue Lys-137.

It belongs to the ribose 5-phosphate isomerase family. Homodimer.

It carries out the reaction aldehydo-D-ribose 5-phosphate = D-ribulose 5-phosphate. It participates in carbohydrate degradation; pentose phosphate pathway; D-ribose 5-phosphate from D-ribulose 5-phosphate (non-oxidative stage): step 1/1. Catalyzes the reversible conversion of ribose-5-phosphate to ribulose 5-phosphate. This chain is Ribose-5-phosphate isomerase A, found in Methanococcus maripaludis (strain C5 / ATCC BAA-1333).